Here is a 126-residue protein sequence, read N- to C-terminus: MAPKAEKKPSEKAPKADKKITKEGGSERKKKTKKSTETYKIYLFKVLKQVHPDIGISGKAMGIMNSFINDTFEKIALESSRLARYNKKPTITSREIQTAVRLVLPGELAKHAVSEGTKAVTKFTSS.

Residues 1–27 (MAPKAEKKPSEKAPKADKKITKEGGSE) show a composition bias toward basic and acidic residues. Positions 1 to 34 (MAPKAEKKPSEKAPKADKKITKEGGSERKKKTKK) are disordered. Ala2 bears the N,N,N-trimethylalanine; alternate mark. At Ala2 the chain carries N,N-dimethylalanine; alternate. An N-methylalanine; alternate modification is found at Ala2. The residue at position 4 (Lys4) is an N6-methyllysine. 4 positions are modified to N6-acetyllysine: Lys7, Lys12, Lys18, and Lys19. Lys122 participates in a covalent cross-link: Glycyl lysine isopeptide (Lys-Gly) (interchain with G-Cter in ubiquitin).

This sequence belongs to the histone H2B family. The nucleosome is a histone octamer containing two molecules each of H2A, H2B, H3 and H4 assembled in one H3-H4 heterotetramer and two H2A-H2B heterodimers. The octamer wraps approximately 147 bp of DNA. In terms of processing, can be acetylated to form H2BK6ac, H2BK33ac and H2BK34ac. Monoubiquitinated by BRE1 to form H2BK143ub1 and deubiquitinated by UBP26. Required for heterochromatic histone H3 di- and trimethylation at H3K4me. May give a specific tag for epigenetic transcriptional activation.

The protein resides in the nucleus. Its subcellular location is the chromosome. Its function is as follows. Core component of nucleosome. Nucleosomes wrap and compact DNA into chromatin, limiting DNA accessibility to the cellular machineries which require DNA as a template. Histones thereby play a central role in transcription regulation, DNA repair, DNA replication and chromosomal stability. DNA accessibility is regulated via a complex set of post-translational modifications of histones, also called histone code, and nucleosome remodeling. The chain is Histone H2B.5 from Arabidopsis thaliana (Mouse-ear cress).